We begin with the raw amino-acid sequence, 402 residues long: TBC1 domain family member 20 (402 aa).

Positions 1–27 are disordered; the sequence is MALRPSKGDGSAGRWDRGAGKADFNAK. The segment covering 14 to 26 has biased composition (basic and acidic residues); the sequence is RWDRGAGKADFNA. Positions 59-245 constitute a Rab-GAP TBC domain; it reads LLTDEIRCQV…RLYDFFLACH (187 aa). 2 helical membrane passes run 237-257 and 366-386; these read LYDF…AVIV and FVKL…LAVV.

It is found in the membrane. GTPase-activating protein specific for Rab1 and Rab2 small GTPase families for which it can accelerate the intrinsic GTP hydrolysis rate by more than five orders of magnitude. Also shows GAP activity for RAB18 GTPase. Promotes RAB18 dissociation from the endoplasmic reticulum (ER) membrane into the cytosol, probably through stimulating RAB18 GTP-hydrolysis. Involved in maintaining endoplasmic reticulum structure. The protein is TBC1 domain family member 20 of Mus musculus (Mouse).